A 320-amino-acid chain; its full sequence is Cytochrome f (320 aa).

The signal sequence occupies residues 1 to 35 (MQTRNAFSWLKKQITRSISVSLMIYILTRTSISSA). Heme is bound by residues Tyr-36, Cys-56, Cys-59, and His-60. A helical membrane pass occupies residues 286-306 (VQGLLFFLASVILAQIFLVLK).

It belongs to the cytochrome f family. In terms of assembly, the 4 large subunits of the cytochrome b6-f complex are cytochrome b6, subunit IV (17 kDa polypeptide, petD), cytochrome f and the Rieske protein, while the 4 small subunits are PetG, PetL, PetM and PetN. The complex functions as a dimer. It depends on heme as a cofactor.

The protein localises to the plastid. The protein resides in the chloroplast thylakoid membrane. Component of the cytochrome b6-f complex, which mediates electron transfer between photosystem II (PSII) and photosystem I (PSI), cyclic electron flow around PSI, and state transitions. The protein is Cytochrome f of Solanum bulbocastanum (Wild potato).